A 301-amino-acid chain; its full sequence is Phosphoglycolate phosphatase 2 (301 aa).

The Nucleophile role is filled by D19.

The protein belongs to the HAD-like hydrolase superfamily. CbbY/CbbZ/Gph/YieH family.

It catalyses the reaction 2-phosphoglycolate + H2O = glycolate + phosphate. Dephosphorylates 2-phosphoglycolate, but does not contribute to photorespiratory metabolism. The protein is Phosphoglycolate phosphatase 2 (PGLP2) of Arabidopsis thaliana (Mouse-ear cress).